A 351-amino-acid polypeptide reads, in one-letter code: Peptide chain release factor 1 (351 aa).

An N5-methylglutamine modification is found at Gln-229.

Belongs to the prokaryotic/mitochondrial release factor family. In terms of processing, methylated by PrmC. Methylation increases the termination efficiency of RF1.

The protein resides in the cytoplasm. Its function is as follows. Peptide chain release factor 1 directs the termination of translation in response to the peptide chain termination codons UAG and UAA. The polypeptide is Peptide chain release factor 1 (Cereibacter sphaeroides (strain ATCC 17023 / DSM 158 / JCM 6121 / CCUG 31486 / LMG 2827 / NBRC 12203 / NCIMB 8253 / ATH 2.4.1.) (Rhodobacter sphaeroides)).